Here is a 484-residue protein sequence, read N- to C-terminus: Dynein regulatory complex subunit 2 (484 aa).

Coiled-coil stretches lie at residues 92-160 and 374-403; these read VDCK…RKTI and KEQE…GMEN.

The protein belongs to the DRC2 family. As to quaternary structure, component of the nexin-dynein regulatory complex (N-DRC). Interacts with DRC1.

The protein localises to the cytoplasm. Its subcellular location is the cytoskeleton. It localises to the flagellum basal body. The protein resides in the cell projection. It is found in the cilium. The protein localises to the flagellum. Its subcellular location is the flagellum axoneme. Component of the nexin-dynein regulatory complex (N-DRC), a key regulator of ciliary/flagellar motility which maintains the alignment and integrity of the distal axoneme and regulates microtubule sliding in motile axonemes. Plays a critical role in the assembly of N-DRC and also stabilizes the assembly of multiple inner dynein arms and radial spokes. Coassembles with DRC1 to form a central scaffold needed for assembly of the N-DRC and its attachment to the outer doublet microtubules. The polypeptide is Dynein regulatory complex subunit 2 (CCDC65) (Macaca fascicularis (Crab-eating macaque)).